The following is a 177-amino-acid chain: Large ribosomal subunit protein uL6 (177 aa).

It belongs to the universal ribosomal protein uL6 family. As to quaternary structure, part of the 50S ribosomal subunit.

Its function is as follows. This protein binds to the 23S rRNA, and is important in its secondary structure. It is located near the subunit interface in the base of the L7/L12 stalk, and near the tRNA binding site of the peptidyltransferase center. The polypeptide is Large ribosomal subunit protein uL6 (Hydrogenovibrio crunogenus (strain DSM 25203 / XCL-2) (Thiomicrospira crunogena)).